A 733-amino-acid polypeptide reads, in one-letter code: Catalase-peroxidase (733 aa).

Positions 1-23 are cleaved as a signal peptide; it reads MNNESKCPFAAAHGVRSPATARA. Positions 96-224 form a cross-link, tryptophyl-tyrosyl-methioninium (Trp-Tyr) (with M-250); that stretch reads WHSAGTYRTA…LAAVQMGLIY (129 aa). The active-site Proton acceptor is H97. Positions 224–250 form a cross-link, tryptophyl-tyrosyl-methioninium (Tyr-Met) (with W-96); that stretch reads YVNPEGPDGNPDPVASGRDVRETFARM. H265 contacts heme b.

The protein belongs to the peroxidase family. Peroxidase/catalase subfamily. Homodimer or homotetramer. It depends on heme b as a cofactor. In terms of processing, formation of the three residue Trp-Tyr-Met cross-link is important for the catalase, but not the peroxidase activity of the enzyme.

It catalyses the reaction H2O2 + AH2 = A + 2 H2O. It carries out the reaction 2 H2O2 = O2 + 2 H2O. Bifunctional enzyme with both catalase and broad-spectrum peroxidase activity. The chain is Catalase-peroxidase from Azoarcus sp. (strain BH72).